Here is a 147-residue protein sequence, read N- to C-terminus: D-aminoacyl-tRNA deacylase (147 aa).

The Gly-cisPro motif, important for rejection of L-amino acids motif lies at 136-137; the sequence is GP.

It belongs to the DTD family. In terms of assembly, homodimer.

It is found in the cytoplasm. The enzyme catalyses glycyl-tRNA(Ala) + H2O = tRNA(Ala) + glycine + H(+). It catalyses the reaction a D-aminoacyl-tRNA + H2O = a tRNA + a D-alpha-amino acid + H(+). Functionally, an aminoacyl-tRNA editing enzyme that deacylates mischarged D-aminoacyl-tRNAs. Also deacylates mischarged glycyl-tRNA(Ala), protecting cells against glycine mischarging by AlaRS. Acts via tRNA-based rather than protein-based catalysis; rejects L-amino acids rather than detecting D-amino acids in the active site. By recycling D-aminoacyl-tRNA to D-amino acids and free tRNA molecules, this enzyme counteracts the toxicity associated with the formation of D-aminoacyl-tRNA entities in vivo and helps enforce protein L-homochirality. This is D-aminoacyl-tRNA deacylase from Streptococcus sanguinis (strain SK36).